We begin with the raw amino-acid sequence, 365 residues long: Eukaryotic translation initiation factor 3 subunit H (365 aa).

An MPN domain is found at 11-160; sequence VKVEALVVMK…LRAFRLSPKF (150 aa).

It belongs to the eIF-3 subunit H family. Component of the eukaryotic translation initiation factor 3 (eIF-3) complex.

It is found in the cytoplasm. Component of the eukaryotic translation initiation factor 3 (eIF-3) complex, which is involved in protein synthesis of a specialized repertoire of mRNAs and, together with other initiation factors, stimulates binding of mRNA and methionyl-tRNAi to the 40S ribosome. The eIF-3 complex specifically targets and initiates translation of a subset of mRNAs involved in cell proliferation. This is Eukaryotic translation initiation factor 3 subunit H from Aspergillus niger (strain ATCC MYA-4892 / CBS 513.88 / FGSC A1513).